Here is a 180-residue protein sequence, read N- to C-terminus: Nudix hydrolase 16, mitochondrial (180 aa).

Positions 18-162 constitute a Nudix hydrolase domain; sequence GSRLVAGCIP…WMKDALVEGF (145 aa). Phe60 is a binding site for substrate. Gly63, Glu78, Glu82, and Glu144 together coordinate Mn(2+). A Nudix box motif is present at residues 63 to 84; sequence GGWENDETVREAAAREAVEEAG.

Belongs to the Nudix hydrolase family. It depends on Mg(2+) as a cofactor. Requires Mn(2+) as cofactor. In terms of tissue distribution, expressed in roots, leaves, stems and inflorescences.

It is found in the mitochondrion. In terms of biological role, probably mediates the hydrolysis of some nucleoside diphosphate derivatives. This Arabidopsis thaliana (Mouse-ear cress) protein is Nudix hydrolase 16, mitochondrial (NUDT16).